The chain runs to 245 residues: 23S rRNA (guanosine-2'-O-)-methyltransferase RlmB (245 aa).

S-adenosyl-L-methionine is bound by residues G197, I217, and L226.

The protein belongs to the class IV-like SAM-binding methyltransferase superfamily. RNA methyltransferase TrmH family. RlmB subfamily.

It localises to the cytoplasm. The catalysed reaction is guanosine(2251) in 23S rRNA + S-adenosyl-L-methionine = 2'-O-methylguanosine(2251) in 23S rRNA + S-adenosyl-L-homocysteine + H(+). Functionally, specifically methylates the ribose of guanosine 2251 in 23S rRNA. In Photobacterium profundum (strain SS9), this protein is 23S rRNA (guanosine-2'-O-)-methyltransferase RlmB.